Here is a 777-residue protein sequence, read N- to C-terminus: Translation initiation factor IF-2 (777 aa).

Disordered stretches follow at residues 30–54 (SPSM…QDEN) and 98–117 (EDSN…SFKE). The span at 98–109 (EDSNEKTNDRDS) shows a compositional bias: basic and acidic residues. A tr-type G domain is found at 279–449 (PKPPIVTFMG…LLIAELMKLE (171 aa)). The interval 288–295 (GHVDHGKT) is G1. 288 to 295 (GHVDHGKT) is a binding site for GTP. Residues 313–317 (GITQH) form a G2 region. A G3 region spans residues 334 to 337 (DTPG). GTP contacts are provided by residues 334 to 338 (DTPGH) and 388 to 391 (NKID). Residues 388–391 (NKID) form a G4 region. Residues 425–427 (SAK) are G5.

This sequence belongs to the TRAFAC class translation factor GTPase superfamily. Classic translation factor GTPase family. IF-2 subfamily.

It localises to the cytoplasm. Functionally, one of the essential components for the initiation of protein synthesis. Protects formylmethionyl-tRNA from spontaneous hydrolysis and promotes its binding to the 30S ribosomal subunits. Also involved in the hydrolysis of GTP during the formation of the 70S ribosomal complex. The sequence is that of Translation initiation factor IF-2 from Wolbachia sp. subsp. Brugia malayi (strain TRS).